The primary structure comprises 210 residues: DNA-directed RNA polymerase subunit 5-like protein 1 (210 aa).

It belongs to the archaeal Rpo5/eukaryotic RPB5 RNA polymerase subunit family.

It localises to the nucleus. The chain is DNA-directed RNA polymerase subunit 5-like protein 1 (NRPB5L1) from Arabidopsis thaliana (Mouse-ear cress).